A 411-amino-acid polypeptide reads, in one-letter code: LL-diaminopimelate aminotransferase (411 aa).

The substrate site is built by Tyr15 and Gly42. Residues Tyr72, 108–109, Tyr132, Asn187, Tyr218, and 246–248 contribute to the pyridoxal 5'-phosphate site; these read SK and SFS. Positions 109, 132, and 187 each coordinate substrate. N6-(pyridoxal phosphate)lysine is present on Lys249. Pyridoxal 5'-phosphate is bound by residues Arg257 and Asn292. Residues Asn292 and Arg388 each coordinate substrate.

This sequence belongs to the class-I pyridoxal-phosphate-dependent aminotransferase family. LL-diaminopimelate aminotransferase subfamily. In terms of assembly, homodimer. Pyridoxal 5'-phosphate is required as a cofactor.

It carries out the reaction (2S,6S)-2,6-diaminopimelate + 2-oxoglutarate = (S)-2,3,4,5-tetrahydrodipicolinate + L-glutamate + H2O + H(+). It functions in the pathway amino-acid biosynthesis; L-lysine biosynthesis via DAP pathway; LL-2,6-diaminopimelate from (S)-tetrahydrodipicolinate (aminotransferase route): step 1/1. Functionally, involved in the synthesis of meso-diaminopimelate (m-DAP or DL-DAP), required for both lysine and peptidoglycan biosynthesis. Catalyzes the direct conversion of tetrahydrodipicolinate to LL-diaminopimelate. This chain is LL-diaminopimelate aminotransferase, found in Gloeothece citriformis (strain PCC 7424) (Cyanothece sp. (strain PCC 7424)).